Consider the following 685-residue polypeptide: Putative protein FAR1-RELATED SEQUENCE 10 (685 aa).

Positions 69–161 (EYYSTFARKS…SNVHNHELLE (93 aa)) constitute an FAR1 domain. Residues 292–388 (VVVFDTSYRS…FMSHIVSKLA (97 aa)) form the MULE domain. Residues 565–603 (GECCVIWNPENEEIQCSCKEFEHSGILCRHTLRVLTVKN) form an SWIM-type zinc finger.

It belongs to the FHY3/FAR1 family.

The protein is Putative protein FAR1-RELATED SEQUENCE 10 (FRS10) of Arabidopsis thaliana (Mouse-ear cress).